We begin with the raw amino-acid sequence, 258 residues long: Putative phosphoenolpyruvate synthase regulatory protein (258 aa).

Position 146-153 (146-153 (GVSRVGKT)) interacts with ADP.

Belongs to the pyruvate, phosphate/water dikinase regulatory protein family. PSRP subfamily.

It carries out the reaction [pyruvate, water dikinase] + ADP = [pyruvate, water dikinase]-phosphate + AMP + H(+). It catalyses the reaction [pyruvate, water dikinase]-phosphate + phosphate + H(+) = [pyruvate, water dikinase] + diphosphate. Functionally, bifunctional serine/threonine kinase and phosphorylase involved in the regulation of the phosphoenolpyruvate synthase (PEPS) by catalyzing its phosphorylation/dephosphorylation. The chain is Putative phosphoenolpyruvate synthase regulatory protein from Thiobacillus denitrificans (strain ATCC 25259 / T1).